The chain runs to 29 residues: Dermaseptin-1 (29 aa).

At valine 29 the chain carries Valine amide.

As to expression, expressed by the skin glands.

Its subcellular location is the secreted. Its function is as follows. Antimicrobial peptide, active against the Gram-positive bacterium S.aureus, the Gram-negative bacteria E.coli and P.aeruginosa, and the yeasts C.albicans and P.brasiliensis. Has hemolytic activity (40% hemolysis at 128 ug/ml). The sequence is that of Dermaseptin-1 from Phyllomedusa tarsius (Brownbelly leaf frog).